Here is a 747-residue protein sequence, read N- to C-terminus: Rho GTPase-activating protein 24 (747 aa).

Disordered stretches follow at residues 1-20 and 327-475; these read MEER…KNTK and FPKD…GTHS. A PH domain is found at 17–123; sequence KNTKCGWLRK…WVKSIRRVIW (107 aa). One can recognise a Rho-GAP domain in the interval 133–327; sequence QKLEDTVRYE…VMISKHDRLF (195 aa). Composition is skewed to polar residues over residues 334-346 and 355-367; these read QSKP…SNNN and GQLQ…NTKE. Residues Ser368, Ser390, Ser395, Ser397, Ser401, Ser412, Ser414, and Ser436 each carry the phosphoserine modification. Over residues 368 to 380 the composition is skewed to basic and acidic residues; it reads SPVRRCSWDKPES. The segment covering 381–404 has biased composition (polar residues); sequence PQRSSVDNGSPTALSGSKTNSPRN. The span at 431–475 shows a compositional bias: polar residues; it reads IVTNGSFSSSNAEGVEKPQTTPNGSLQARRTSSLKSSGTKMGTHS. Thr451 carries the phosphothreonine modification. Ser494 is subject to Phosphoserine. A disordered region spans residues 581 to 639; that stretch reads DFYVGNFEDPVLDGPPQDDLSHPGDYENKSDRRSVGGRSSRATSSSDNSETFVGNTSSN. The segment covering 599 to 614 has biased composition (basic and acidic residues); sequence DLSHPGDYENKSDRRS. Positions 616 to 629 are enriched in low complexity; the sequence is GGRSSRATSSSDNS. Positions 630–639 are enriched in polar residues; it reads ETFVGNTSSN. Residues 648–728 adopt a coiled-coil conformation; it reads SSLKQEMTKQ…KEMEQFFSTF (81 aa).

Interacts with FLNA. Post-translationally, phosphorylated by ROCK, leading to activate the RacGAP activity.

It localises to the cytoplasm. Its subcellular location is the cytoskeleton. The protein localises to the cell junction. The protein resides in the adherens junction. It is found in the focal adhesion. It localises to the cell projection. In terms of biological role, rho GTPase-activating protein involved in cell polarity, cell morphology and cytoskeletal organization. Acts as a GTPase activator for the Rac-type GTPase by converting it to an inactive GDP-bound state. Controls actin remodeling by inactivating Rac downstream of Rho leading to suppress leading edge protrusion and promotes cell retraction to achieve cellular polarity. Able to suppress RAC1 and CDC42 activity in vitro. Overexpression induces cell rounding with partial or complete disruption of actin stress fibers and formation of membrane ruffles, lamellipodia, and filopodia. Isoform 2 is a vascular cell-specific GAP involved in modulation of angiogenesis. The protein is Rho GTPase-activating protein 24 (Arhgap24) of Mus musculus (Mouse).